The sequence spans 127 residues: Glycine cleavage system H protein (127 aa).

The 83-residue stretch at 22–104 folds into the Lipoyl-binding domain; it reads KARIGITHFA…YEKAWMIVVE (83 aa). An N6-lipoyllysine modification is found at Lys63.

The protein belongs to the GcvH family. The glycine cleavage system is composed of four proteins: P, T, L and H. Requires (R)-lipoate as cofactor.

Functionally, the glycine cleavage system catalyzes the degradation of glycine. The H protein shuttles the methylamine group of glycine from the P protein to the T protein. In terms of biological role, is also involved in protein lipoylation via its role as an octanoyl/lipoyl carrier protein intermediate. The protein is Glycine cleavage system H protein of Bacillus velezensis (strain DSM 23117 / BGSC 10A6 / LMG 26770 / FZB42) (Bacillus amyloliquefaciens subsp. plantarum).